A 415-amino-acid chain; its full sequence is Carboxypeptidase G2 (415 aa).

The N-terminal stretch at 1 to 22 (MRPSIHRTAIAAVLATAFVAGT) is a signal peptide. His112 provides a ligand contact to Zn(2+). Asp114 is an active-site residue. Position 141 (Asp141) interacts with Zn(2+). Glu175 acts as the Proton acceptor in catalysis. 3 residues coordinate Zn(2+): Glu176, Glu200, and His385.

It belongs to the peptidase M20A family. As to quaternary structure, homodimer. The cofactor is Zn(2+).

The enzyme catalyses Release of C-terminal glutamate residues from a wide range of N-acylating moieties, including peptidyl, aminoacyl, benzoyl, benzyloxycarbonyl, folyl and pteroyl groups.. Functionally, catalyzes the hydrolysis of reduced and non-reduced folates to pteroates and L-glutamate. This enzyme has a broad specificity. The sequence is that of Carboxypeptidase G2 (cpg2) from Pseudomonas sp. (strain RS-16).